The following is a 252-amino-acid chain: Hydroxyacylglutathione hydrolase (252 aa).

The Zn(2+) site is built by H54, H56, D58, H59, H111, D128, and H166.

This sequence belongs to the metallo-beta-lactamase superfamily. Glyoxalase II family. In terms of assembly, monomer. The cofactor is Zn(2+).

The enzyme catalyses an S-(2-hydroxyacyl)glutathione + H2O = a 2-hydroxy carboxylate + glutathione + H(+). It participates in secondary metabolite metabolism; methylglyoxal degradation; (R)-lactate from methylglyoxal: step 2/2. In terms of biological role, thiolesterase that catalyzes the hydrolysis of S-D-lactoyl-glutathione to form glutathione and D-lactic acid. The chain is Hydroxyacylglutathione hydrolase from Aliivibrio fischeri (strain MJ11) (Vibrio fischeri).